A 488-amino-acid chain; its full sequence is MIPVVALVGRPNVGKSTLFNRLTRTRDALVADYPGLTRDRKYGRAHLSGYEFIVVDTGGIDGTEEGIETHMAEQSMAAIEEADVVLFLTDARAGLTAADQAISEHLRRREKTTFVVANKVDGIDADSACAEFWALGLGEVYQMAAAQGRGVTNMIEYALAPYAEALGLNRDGDDEEEKEEREYTEEEAEAEQTRLQDLPIKLAVIGKPNVGKSTLTNRILGEERVVVYDAPGTTRDSIYIPMERDGREYVLIDTAGVRRRSKVNETVEKFSVIKTLKAVEDCNVVLLIVDAREGIAEQDLGLLGFALNAGRALVIAVNKWDGIDQDIKDRVKSELDRRLGFIDFARIHFISALHGTGVGHLFESVQEAYESATRRVSTSMLTRIMQMAQDDHQPPMVNGRRVKLKYAHAGGYNPPIVVVHGNQVKKLPDSYKRFMMNYYRRSLKVMGTPIQVRFQDGDNPFEGMNTKKLTVSQERRRKRMMTHIKDKK.

In terms of domain architecture, EngA-type G 1 spans 3–166 (PVVALVGRPN…YALAPYAEAL (164 aa)). Residues 9-16 (GRPNVGKS), 56-60 (DTGGI), and 118-121 (NKVD) each bind GTP. A disordered region spans residues 168–192 (LNRDGDDEEEKEEREYTEEEAEAEQ). The span at 172 to 190 (GDDEEEKEEREYTEEEAEA) shows a compositional bias: acidic residues. The EngA-type G 2 domain maps to 200–373 (IKLAVIGKPN…SVQEAYESAT (174 aa)). GTP-binding positions include 206–213 (GKPNVGKS), 253–257 (DTAGV), and 318–321 (NKWD). The KH-like domain occupies 374-458 (RRVSTSMLTR…PIQVRFQDGD (85 aa)).

This sequence belongs to the TRAFAC class TrmE-Era-EngA-EngB-Septin-like GTPase superfamily. EngA (Der) GTPase family. As to quaternary structure, associates with the 50S ribosomal subunit.

Its function is as follows. GTPase that plays an essential role in the late steps of ribosome biogenesis. The protein is GTPase Der of Shewanella woodyi (strain ATCC 51908 / MS32).